We begin with the raw amino-acid sequence, 159 residues long: Cyclic pyranopterin monophosphate synthase (159 aa).

Residues 75 to 77 (LCH) and 113 to 114 (ME) contribute to the substrate site. The active site involves aspartate 128.

This sequence belongs to the MoaC family. Homohexamer; trimer of dimers.

It carries out the reaction (8S)-3',8-cyclo-7,8-dihydroguanosine 5'-triphosphate = cyclic pyranopterin phosphate + diphosphate. It functions in the pathway cofactor biosynthesis; molybdopterin biosynthesis. Functionally, catalyzes the conversion of (8S)-3',8-cyclo-7,8-dihydroguanosine 5'-triphosphate to cyclic pyranopterin monophosphate (cPMP). The sequence is that of Cyclic pyranopterin monophosphate synthase from Yersinia pseudotuberculosis serotype O:3 (strain YPIII).